An 877-amino-acid polypeptide reads, in one-letter code: Probable alpha/beta-glucosidase agdC (877 aa).

The signal sequence occupies residues 1–14; the sequence is MLGSLLLLAPLAGA. Asn-171, Asn-293, and Asn-373 each carry an N-linked (GlcNAc...) asparagine glycan. The active-site Nucleophile is the Asp-422. Glu-425 is a catalytic residue. The tract at residues 432 to 476 is disordered; it reads DPCTDPERYSSENNLPPAPPPVRSSSPRPLPGFPADFQPSSASRS. Over residues 447 to 463 the composition is skewed to pro residues; it reads PPAPPPVRSSSPRPLPG. Asn-508 carries N-linked (GlcNAc...) asparagine glycosylation. Residue Asp-573 is the Proton donor of the active site. Residues Asn-574, Asn-610, and Asn-744 are each glycosylated (N-linked (GlcNAc...) asparagine).

Belongs to the glycosyl hydrolase 31 family.

Its subcellular location is the secreted. The catalysed reaction is Hydrolysis of terminal, non-reducing (1-&gt;4)-linked alpha-D-glucose residues with release of alpha-D-glucose.. It carries out the reaction Hydrolysis of terminal, non-reducing beta-D-glucosyl residues with release of beta-D-glucose.. Its function is as follows. Glucosidase involved in the degradation of cellulosic biomass. Has both alpha- and beta-glucosidase activity. This Aspergillus oryzae (strain ATCC 42149 / RIB 40) (Yellow koji mold) protein is Probable alpha/beta-glucosidase agdC (agdC).